A 273-amino-acid polypeptide reads, in one-letter code: DNA replication complex GINS protein psf2 (273 aa).

Disordered stretches follow at residues 88–110 (KEDP…SQPG) and 240–273 (ASAE…DMGL). Over residues 244–257 (ATRREEEEEARRGG) the composition is skewed to basic and acidic residues. Positions 261–273 (GDGDEDSDEDMGL) are enriched in acidic residues.

Belongs to the GINS2/PSF2 family. As to quaternary structure, component of the GINS complex which is a heterotetramer of div-26/sld5, drc-1/psf1, drc-2/psf2 and drc-3/psf3.

It is found in the nucleus. Its function is as follows. The GINS complex plays an essential role in the initiation of DNA replication. Has a role in chromosome segregation. The sequence is that of DNA replication complex GINS protein psf2 (drc-2) from Neurospora crassa (strain ATCC 24698 / 74-OR23-1A / CBS 708.71 / DSM 1257 / FGSC 987).